The primary structure comprises 233 residues: Glucosamine-6-phosphate deaminase (233 aa).

Asp-62 functions as the Proton acceptor; for enolization step in the catalytic mechanism. Asn-128 serves as the catalytic For ring-opening step. His-130 serves as the catalytic Proton acceptor; for ring-opening step. The For ring-opening step role is filled by Glu-135.

It belongs to the glucosamine/galactosamine-6-phosphate isomerase family. NagB subfamily.

The catalysed reaction is alpha-D-glucosamine 6-phosphate + H2O = beta-D-fructose 6-phosphate + NH4(+). It functions in the pathway amino-sugar metabolism; N-acetylneuraminate degradation; D-fructose 6-phosphate from N-acetylneuraminate: step 5/5. In terms of biological role, catalyzes the reversible isomerization-deamination of glucosamine 6-phosphate (GlcN6P) to form fructose 6-phosphate (Fru6P) and ammonium ion. This chain is Glucosamine-6-phosphate deaminase, found in Streptococcus agalactiae serotype Ia (strain ATCC 27591 / A909 / CDC SS700).